We begin with the raw amino-acid sequence, 1312 residues long: Beta-N-acetylhexosaminidase (1312 aa).

The first 33 residues, 1-33, serve as a signal peptide directing secretion; that stretch reads MKHEKQQRFSIRKYAVGAASVLIGFAFQAQTVA. Residues 38 to 59 are compositionally biased toward polar residues; that stretch reads TPTTTENQPTIHTVSDSPQSSE. Positions 38–178 are disordered; sequence TPTTTENQPT…ATEAGKERAA (141 aa). The span at 118 to 177 shows a compositional bias: basic and acidic residues; sequence AEKETANKKAEEASPKKEEAKEVDSKESNTDKTDKDKPAKKDEAKAEADKPATEAGKERA. Catalytic domain stretches follow at residues 176 to 616 and 621 to 1046; these read RAAT…TPEA and EAKR…PAVT. G5 domains are found at residues 1059-1138 and 1150-1230; these read NVET…GAPV and TTEV…GTMV. The interval 1244–1290 is disordered; the sequence is EEKPKLEIPSQPAPSTAPAEESKVLPQDPAPVVTEKKLPETGTHDSA. Residues 1277–1286 are compositionally biased toward basic and acidic residues; the sequence is TEKKLPETGT. Positions 1281 to 1285 match the LPXTG sorting signal motif; that stretch reads LPETG. Pentaglycyl murein peptidoglycan amidated threonine is present on Thr1284. Residues 1285–1312 constitute a propeptide, removed by sortase; the sequence is GTHDSAGLVVAGLMSTLAAYGLTKRKED.

The protein belongs to the glycosyl hydrolase 20 family.

The protein resides in the secreted. It is found in the cell wall. It catalyses the reaction Hydrolysis of terminal non-reducing N-acetyl-D-hexosamine residues in N-acetyl-beta-D-hexosaminides.. The polypeptide is Beta-N-acetylhexosaminidase (strH) (Streptococcus pneumoniae serotype 4 (strain ATCC BAA-334 / TIGR4)).